The following is a 714-amino-acid chain: Fatty acid oxidation complex subunit alpha (714 aa).

Residues 1-190 (MEMASAFTLN…KLGLVDDVVP (190 aa)) are enoyl-CoA hydratase. Positions 306 to 714 (APLNSVGILG…FWKTTATDLQ (409 aa)) are 3-hydroxyacyl-CoA dehydrogenase.

It in the N-terminal section; belongs to the enoyl-CoA hydratase/isomerase family. The protein in the central section; belongs to the 3-hydroxyacyl-CoA dehydrogenase family. In terms of assembly, heterotetramer of two alpha chains (FadJ) and two beta chains (FadI).

The protein localises to the cytoplasm. The catalysed reaction is a (3S)-3-hydroxyacyl-CoA = a (2E)-enoyl-CoA + H2O. It carries out the reaction a 4-saturated-(3S)-3-hydroxyacyl-CoA = a (3E)-enoyl-CoA + H2O. It catalyses the reaction a (3S)-3-hydroxyacyl-CoA + NAD(+) = a 3-oxoacyl-CoA + NADH + H(+). The enzyme catalyses (3S)-3-hydroxybutanoyl-CoA = (3R)-3-hydroxybutanoyl-CoA. The protein operates within lipid metabolism; fatty acid beta-oxidation. Its function is as follows. Catalyzes the formation of a hydroxyacyl-CoA by addition of water on enoyl-CoA. Also exhibits 3-hydroxyacyl-CoA epimerase and 3-hydroxyacyl-CoA dehydrogenase activities. This chain is Fatty acid oxidation complex subunit alpha, found in Escherichia coli O6:H1 (strain CFT073 / ATCC 700928 / UPEC).